The chain runs to 382 residues: Gap junction alpha-1 protein (382 aa).

At 2–23 the chain is on the cytoplasmic side; it reads GDWSALGKLLDKVQAYSTAGGK. At serine 5 the chain carries Phosphoserine. A helical membrane pass occupies residues 24–44; the sequence is VWLSVLFIFRILLLGTAVESA. Residues 45 to 76 are Extracellular-facing; the sequence is WGDEQSAFRCNTQQPGCENVCYDKSFPISHVR. Intrachain disulfides connect cysteine 54-cysteine 192 and cysteine 187-cysteine 198. Residues 77–97 traverse the membrane as a helical segment; it reads FWVLQIIFVSVPTLLYLAHVF. Residues 98–155 are Cytoplasmic-facing; that stretch reads YVMRKEEKLNKKEEELKVAQTDGVNVDMHLKQIEIKKFKYGIEEHGKVKMRGGLLRTY. Lysine 144 participates in a covalent cross-link: Glycyl lysine isopeptide (Lys-Gly) (interchain with G-Cter in SUMO). A helical transmembrane segment spans residues 156-176; it reads IISILFKSIFEVAFLLIQWYI. Residues 177–207 are Extracellular-facing; that stretch reads YGFSLSAVYTCKRDPCPHQVDCFLSRPTEKT. The helical transmembrane segment at 208–228 threads the bilayer; sequence IFIIFMLVVSLVSLALNIIEL. Residues 229–382 lie on the Cytoplasmic side of the membrane; sequence FYVFFKGVKD…SRPRPDDLEI (154 aa). Lysine 237 participates in a covalent cross-link: Glycyl lysine isopeptide (Lys-Gly) (interchain with G-Cter in SUMO). The interaction with NOV stretch occupies residues 244–382; the sequence is SDPYHATSGA…SRPRPDDLEI (139 aa). Tyrosine 247 bears the Phosphotyrosine mark. Phosphoserine occurs at positions 255 and 262. The segment at 264–382 is interaction with UBQLN4; it reads KYAYFNGCSS…SRPRPDDLEI (119 aa). S-nitrosocysteine is present on cysteine 271. Residue threonine 275 is modified to Phosphothreonine. Phosphoserine occurs at positions 306 and 314. A compositionally biased stretch (polar residues) spans 317-332; that stretch reads QNRMGQAGSTISNSHA. Residues 317–382 are disordered; the sequence is QNRMGQAGST…SRPRPDDLEI (66 aa). Residue serine 325 is modified to Phosphoserine; by CK1. Phosphothreonine is present on threonine 326. Serine 328 and serine 330 each carry phosphoserine; by CK1. Residues serine 344 and serine 365 each carry the phosphoserine modification. Over residues 362–374 the composition is skewed to low complexity; that stretch reads RPSSRASSRASSR. Serine 368 carries the post-translational modification Phosphoserine; by PKC/PRKCG and PKC/PRKCD. Phosphoserine is present on residues serine 369 and serine 373.

Belongs to the connexin family. Alpha-type (group II) subfamily. A connexon is composed of a hexamer of connexins. Interacts (via C-terminus) with TJP1. Interacts (via C-terminus) with SRC (via SH3 domain). Interacts (not ubiquitinated) with UBQLN4 (via UBA domain). Interacts with SGSM3 and CNST. Interacts with RIC1/CIP150. Interacts with CSNK1D. Interacts with NOV. Interacts with TMEM65. Interacts with ANK3/ANKG and PKP2. In terms of processing, phosphorylated at Ser-368 by PRKCG; phosphorylation induces disassembly of gap junction plaques and inhibition of gap junction activity. Phosphorylation at Ser-325, Ser-328 and Ser-330 by CK1 modulates gap junction assembly. Phosphorylation at Ser-368 by PRKCD triggers its internalization into small vesicles leading to proteasome-mediated degradation. Sumoylated with SUMO1, SUMO2 and SUMO3, which may regulate the level of functional Cx43 gap junctions at the plasma membrane. May be desumoylated by SENP1 or SENP2. Post-translationally, S-nitrosylation at Cys-271 is enriched at the muscle endothelial gap junction in arteries, it augments channel permeability and may regulate of smooth muscle cell to endothelial cell communication. In terms of processing, acetylated in the developing cortex; leading to delocalization from the cell membrane. In terms of tissue distribution, expressed at intercalated disks in the heart (at protein level). Expressed in the fetal cochlea.

It is found in the cell membrane. The protein resides in the cell junction. The protein localises to the gap junction. It localises to the endoplasmic reticulum. Its function is as follows. Gap junction protein that acts as a regulator of bladder capacity. A gap junction consists of a cluster of closely packed pairs of transmembrane channels, the connexons, through which materials of low MW diffuse from one cell to a neighboring cell. May play a critical role in the physiology of hearing by participating in the recycling of potassium to the cochlear endolymph. Negative regulator of bladder functional capacity: acts by enhancing intercellular electrical and chemical transmission, thus sensitizing bladder muscles to cholinergic neural stimuli and causing them to contract. May play a role in cell growth inhibition through the regulation of NOV expression and localization. Plays an essential role in gap junction communication in the ventricles. In Homo sapiens (Human), this protein is Gap junction alpha-1 protein (GJA1).